The sequence spans 527 residues: Probable serine/threonine-protein kinase DDB_G0271538 (527 aa).

Positions 1–10 (MNINFSKDDI) are enriched in basic and acidic residues. The disordered stretch occupies residues 1-24 (MNINFSKDDITGLPKSTKEEDEND). In terms of domain architecture, Protein kinase spans 33-294 (LFMDVEIGRG…KIVVEGLKVL (262 aa)). Residues 39–47 (IGRGSFGQV) and K60 each bind ATP. The active-site Proton acceptor is D156. Disordered stretches follow at residues 304–375 (VKGK…ISGS), 422–452 (FTPPPNSKSMMDLKQSSAVDEDEDEDEDDVP), and 485–527 (TALD…KKKL). Acidic residues predominate over residues 313-324 (DPDEDSFIDPND). Positions 325 to 359 (DSNNNNNSENNNNNNDNSNENNENNNENNNNSNEN) are enriched in low complexity. Acidic residues predominate over residues 440 to 452 (VDEDEDEDEDDVP). Basic residues predominate over residues 512 to 527 (PKKKPNNKNKKKKKKL).

This sequence belongs to the protein kinase superfamily. TKL Ser/Thr protein kinase family.

The catalysed reaction is L-seryl-[protein] + ATP = O-phospho-L-seryl-[protein] + ADP + H(+). The enzyme catalyses L-threonyl-[protein] + ATP = O-phospho-L-threonyl-[protein] + ADP + H(+). The polypeptide is Probable serine/threonine-protein kinase DDB_G0271538 (Dictyostelium discoideum (Social amoeba)).